Reading from the N-terminus, the 628-residue chain is Nuclear receptor subfamily 4 group A member 3 (628 aa).

The segment at 1–112 (MPCVQAQYSP…HHHHHHHHHH (112 aa)) is activation function (AF)-1 domain. Residues 1-140 (MPCVQAQYSP…PSTSMYFKQS (140 aa)) are required for DNA-PK heterotrimer. Residues 1–293 (MPCVQAQYSP…NRSSSSGEGT (293 aa)) are interaction with NCOA1, NCOA2, NCOA3 and KAT2B. 2 disordered regions span residues 96–163 (HGYH…DELP) and 269–290 (ASSLLGESPSLPSPPNRSSSSG). A compositionally biased stretch (basic residues) spans 97–113 (GYHHHHHHHHHHHHHHQ). Residues 142–151 (PSTPTTPGFP) are compositionally biased toward pro residues. Positions 270-289 (SSLLGESPSLPSPPNRSSSS) are enriched in low complexity. Residues 291–366 (EGTCAVCGDN…VGMVKEVVRT (76 aa)) constitute a DNA-binding region (nuclear receptor). NR C4-type zinc fingers lie at residues 294 to 314 (CAVCGDNAACQHYGVRTCEGC) and 330 to 354 (CLANKNCPVDKRRRNRCQYCRFQKC). Residues 366 to 396 (TDSLKGRRGRLPSKPKSPLQQEPSQPSPPSP) form a disordered region. A compositionally biased stretch (low complexity) spans 379–389 (KPKSPLQQEPS). An interaction with KAT2B region spans residues 381–628 (KSPLQQEPSQ…DKLFLDTLPF (248 aa)). Positions 396–625 (PPICMMNALV…SVIDKLFLDT (230 aa)) constitute an NR LBD domain.

This sequence belongs to the nuclear hormone receptor family. NR4 subfamily. Interacts with SIX3 (via homeobox); differentially regulates the transcriptional activities of NR4A3. Interacts with NR3C1 (via nuclear receptor DNA-binding domain); the interactions represses transcription activity of NR4A3 on the POMC promoter Nur response element (NurRE). Interacts with TRIM28; the interactions potentiates NR4A3 activity on NurRE promoter. Binds DNA as a monomer and homodimer. Interacts with PARP1; activates PARP1 by improving acetylation of PARP1 and suppressing the interaction between PARP1 and SIRT1. Interacts with the constituents of DNA-PK heterotrimer PRKDC, XRCC6 and XRCC5; phosphorylates and prevents NR4A3 ubiquitinylation and degradation. Interacts with NCOA2; potentiates the activity of the NR4A3. Interacts with NCOA1, NCOA3, MED1 and KAT2B. Interacts with EP300 and NCOA2; mediates the recruitment of MED1 in the coactivator complex. In terms of processing, phosphorylated by PRKDC. Expressed at high levels in cultured apoptotic neuronal cells and fetal brain, and at low level in adult brain.

It is found in the nucleus. In terms of biological role, transcriptional activator that binds to regulatory elements in promoter regions in a cell- and response element (target)-specific manner. Induces gene expression by binding as monomers to the NR4A1 response element (NBRE) 5'-AAAAGGTCA-3' site and as homodimers to the Nur response element (NurRE) site in the promoter of their regulated target genes. Plays a role in the regulation of proliferation, survival and differentiation of many different cell types and also in metabolism and inflammation. Mediates proliferation of vascular smooth muscle, myeloid progenitor cell and type B pancreatic cells; promotes mitogen-induced vascular smooth muscle cell proliferation through transactivation of SKP2 promoter by binding a NBRE site. Upon PDGF stimulation, stimulates vascular smooth muscle cell proliferation by regulating CCND1 and CCND2 expression. In islets, induces type B pancreatic cell proliferation through up-regulation of genes that activate cell cycle, as well as genes that cause degradation of the CDKN1A. Negatively regulates myeloid progenitor cell proliferation by repressing RUNX1 in a NBRE site-independent manner. During inner ear, plays a role as a key mediator of the proliferative growth phase of semicircular canal development. Also mediates survival of neuron and smooth muscle cells; mediates CREB-induced neuronal survival, and during hippocampus development, plays a critical role in pyramidal cell survival and axonal guidance. Is required for S phase entry of the cell cycle and survival of smooth muscle cells by inducing CCND1, resulting in RB1 phosphorylation. Binds to NBRE motif in CCND1 promoter, resulting in the activation of the promoter and CCND1 transcription. Also plays a role in inflammation; Upon TNF stimulation, mediates monocyte adhesion by inducing the expression of VCAM1 and ICAM1 by binding to the NBRE consensus site. In mast cells activated by Fc-epsilon receptor cross-linking, promotes the synthesis and release of cytokines but impairs events leading to degranulation. Also plays a role in metabolism; by modulating feeding behavior; and by playing a role in energy balance by inhibiting the glucocorticoid-induced orexigenic neuropeptides AGRP expression, at least in part by forming a complex with activated NR3C1 on the AGRP-glucocorticoid response element (GRE), and thus weakening the DNA binding activity of NR3C1. Upon catecholamines stimulation, regulates gene expression that controls oxidative metabolism in skeletal muscle. Plays a role in glucose transport by regulating translocation of the SLC2A4 glucose transporter to the cell surface. Finally, during gastrulation plays a crucial role in the formation of anterior mesoderm by controlling cell migration. Also participates in cardiac hypertrophy by activating PARP1. The polypeptide is Nuclear receptor subfamily 4 group A member 3 (Nr4a3) (Rattus norvegicus (Rat)).